The sequence spans 291 residues: 4-hydroxy-tetrahydrodipicolinate synthase (291 aa).

Thr-42 provides a ligand contact to pyruvate. Tyr-129 serves as the catalytic Proton donor/acceptor. The active-site Schiff-base intermediate with substrate is Lys-157. Pyruvate is bound at residue Ile-198.

It belongs to the DapA family. In terms of assembly, homotetramer; dimer of dimers.

The protein localises to the cytoplasm. It carries out the reaction L-aspartate 4-semialdehyde + pyruvate = (2S,4S)-4-hydroxy-2,3,4,5-tetrahydrodipicolinate + H2O + H(+). It functions in the pathway amino-acid biosynthesis; L-lysine biosynthesis via DAP pathway; (S)-tetrahydrodipicolinate from L-aspartate: step 3/4. Functionally, catalyzes the condensation of (S)-aspartate-beta-semialdehyde [(S)-ASA] and pyruvate to 4-hydroxy-tetrahydrodipicolinate (HTPA). The polypeptide is 4-hydroxy-tetrahydrodipicolinate synthase (Chlamydia pneumoniae (Chlamydophila pneumoniae)).